Here is a 246-residue protein sequence, read N- to C-terminus: tRNA (guanine-N(7)-)-methyltransferase (246 aa).

S-adenosyl-L-methionine contacts are provided by E77, E102, D129, and D152. The active site involves D152. Substrate-binding positions include K156, D188, and 225–228 (TKFE).

The protein belongs to the class I-like SAM-binding methyltransferase superfamily. TrmB family.

The enzyme catalyses guanosine(46) in tRNA + S-adenosyl-L-methionine = N(7)-methylguanosine(46) in tRNA + S-adenosyl-L-homocysteine. It functions in the pathway tRNA modification; N(7)-methylguanine-tRNA biosynthesis. Functionally, catalyzes the formation of N(7)-methylguanine at position 46 (m7G46) in tRNA. The polypeptide is tRNA (guanine-N(7)-)-methyltransferase (Haemophilus influenzae (strain PittGG)).